A 286-amino-acid chain; its full sequence is Shikimate dehydrogenase (NADP(+)) (286 aa).

Residues 22–24 (SLS) and Thr-69 contribute to the shikimate site. Catalysis depends on Lys-73, which acts as the Proton acceptor. Glu-85 contributes to the NADP(+) binding site. Shikimate is bound by residues Asn-94 and Asp-109. Residues 133–137 (GAGGA) and Val-231 each bind NADP(+). A shikimate-binding site is contributed by Tyr-233. Residue Gly-254 coordinates NADP(+).

Belongs to the shikimate dehydrogenase family. Homodimer.

It catalyses the reaction shikimate + NADP(+) = 3-dehydroshikimate + NADPH + H(+). It functions in the pathway metabolic intermediate biosynthesis; chorismate biosynthesis; chorismate from D-erythrose 4-phosphate and phosphoenolpyruvate: step 4/7. Involved in the biosynthesis of the chorismate, which leads to the biosynthesis of aromatic amino acids. Catalyzes the reversible NADPH linked reduction of 3-dehydroshikimate (DHSA) to yield shikimate (SA). The polypeptide is Shikimate dehydrogenase (NADP(+)) (Alkaliphilus metalliredigens (strain QYMF)).